The sequence spans 89 residues: Small ribosomal subunit protein bS20 (89 aa).

It belongs to the bacterial ribosomal protein bS20 family.

In terms of biological role, binds directly to 16S ribosomal RNA. This chain is Small ribosomal subunit protein bS20, found in Xanthobacter autotrophicus (strain ATCC BAA-1158 / Py2).